A 424-amino-acid chain; its full sequence is D-inositol 3-phosphate glycosyltransferase (424 aa).

Histidine 9 contributes to the 1D-myo-inositol 3-phosphate binding site. Residues 15-16 (QP) and glycine 23 each bind UDP-N-acetyl-alpha-D-glucosamine. Residues 20-25 (DSGGMN), lysine 78, tyrosine 110, threonine 134, and arginine 154 each bind 1D-myo-inositol 3-phosphate. Arginine 231, lysine 236, and arginine 294 together coordinate UDP-N-acetyl-alpha-D-glucosamine. Residues tyrosine 303, arginine 304, and alanine 306 each coordinate Mg(2+). Glutamate 316 and glutamate 324 together coordinate UDP-N-acetyl-alpha-D-glucosamine. Position 330 (threonine 330) interacts with Mg(2+).

It belongs to the glycosyltransferase group 1 family. MshA subfamily. In terms of assembly, homodimer.

It catalyses the reaction 1D-myo-inositol 3-phosphate + UDP-N-acetyl-alpha-D-glucosamine = 1D-myo-inositol 2-acetamido-2-deoxy-alpha-D-glucopyranoside 3-phosphate + UDP + H(+). Functionally, catalyzes the transfer of a N-acetyl-glucosamine moiety to 1D-myo-inositol 3-phosphate to produce 1D-myo-inositol 2-acetamido-2-deoxy-glucopyranoside 3-phosphate in the mycothiol biosynthesis pathway. This is D-inositol 3-phosphate glycosyltransferase from Corynebacterium efficiens (strain DSM 44549 / YS-314 / AJ 12310 / JCM 11189 / NBRC 100395).